We begin with the raw amino-acid sequence, 88 residues long: Small ribosomal subunit protein uS15 (88 aa).

It belongs to the universal ribosomal protein uS15 family. Part of the 30S ribosomal subunit. Forms a bridge to the 50S subunit in the 70S ribosome, contacting the 23S rRNA.

Functionally, one of the primary rRNA binding proteins, it binds directly to 16S rRNA where it helps nucleate assembly of the platform of the 30S subunit by binding and bridging several RNA helices of the 16S rRNA. In terms of biological role, forms an intersubunit bridge (bridge B4) with the 23S rRNA of the 50S subunit in the ribosome. The polypeptide is Small ribosomal subunit protein uS15 (Geotalea daltonii (strain DSM 22248 / JCM 15807 / FRC-32) (Geobacter daltonii)).